We begin with the raw amino-acid sequence, 752 residues long: Myotubularin-related protein 10 (752 aa).

The Myotubularin phosphatase domain maps to 206–636 (FDCSSDWDRE…SHLSVWKLYF (431 aa)). Residues 652–683 (TAFHKLSVLTDEIEMLQNQLRQYKGAAGTANT) are a coiled coil.

Belongs to the protein-tyrosine phosphatase family. Non-receptor class myotubularin subfamily.

The polypeptide is Myotubularin-related protein 10 (mtmr10) (Danio rerio (Zebrafish)).